A 157-amino-acid polypeptide reads, in one-letter code: MSRKSKKIKKKVFKDSKYDSQVIAKFVNRMMYDGKKFISESIVYNSIDMLAEKLEEVDKVAAFNKALDNVKPLVEVRSRRVGGATYQVPVEVREERREALAMKWIISAARKASGKSMQEKLANELVNSYNSTGAAFKKREDTHRMAEANRAFTHYRW.

This sequence belongs to the universal ribosomal protein uS7 family. As to quaternary structure, part of the 30S ribosomal subunit. Contacts proteins S9 and S11.

One of the primary rRNA binding proteins, it binds directly to 16S rRNA where it nucleates assembly of the head domain of the 30S subunit. Is located at the subunit interface close to the decoding center, probably blocks exit of the E-site tRNA. This is Small ribosomal subunit protein uS7 from Borrelia duttonii (strain Ly).